A 233-amino-acid chain; its full sequence is Biosynthetic peptidoglycan transglycosylase (233 aa).

Residues 7–27 form a helical membrane-spanning segment; that stretch reads VFTWLAKLVLGLFFASILSVV.

It belongs to the glycosyltransferase 51 family.

The protein localises to the cell inner membrane. It catalyses the reaction [GlcNAc-(1-&gt;4)-Mur2Ac(oyl-L-Ala-gamma-D-Glu-L-Lys-D-Ala-D-Ala)](n)-di-trans,octa-cis-undecaprenyl diphosphate + beta-D-GlcNAc-(1-&gt;4)-Mur2Ac(oyl-L-Ala-gamma-D-Glu-L-Lys-D-Ala-D-Ala)-di-trans,octa-cis-undecaprenyl diphosphate = [GlcNAc-(1-&gt;4)-Mur2Ac(oyl-L-Ala-gamma-D-Glu-L-Lys-D-Ala-D-Ala)](n+1)-di-trans,octa-cis-undecaprenyl diphosphate + di-trans,octa-cis-undecaprenyl diphosphate + H(+). It participates in cell wall biogenesis; peptidoglycan biosynthesis. Its function is as follows. Peptidoglycan polymerase that catalyzes glycan chain elongation from lipid-linked precursors. This chain is Biosynthetic peptidoglycan transglycosylase, found in Shewanella oneidensis (strain ATCC 700550 / JCM 31522 / CIP 106686 / LMG 19005 / NCIMB 14063 / MR-1).